A 230-amino-acid chain; its full sequence is 7-cyano-7-deazaguanine synthase (230 aa).

ATP is bound at residue 8-18 (FSGGQDSTTCL). Zn(2+) is bound by residues Cys-187, Cys-196, Cys-199, and Cys-202.

It belongs to the QueC family. Zn(2+) is required as a cofactor.

It carries out the reaction 7-carboxy-7-deazaguanine + NH4(+) + ATP = 7-cyano-7-deazaguanine + ADP + phosphate + H2O + H(+). It participates in purine metabolism; 7-cyano-7-deazaguanine biosynthesis. Its function is as follows. Catalyzes the ATP-dependent conversion of 7-carboxy-7-deazaguanine (CDG) to 7-cyano-7-deazaguanine (preQ(0)). This Shewanella amazonensis (strain ATCC BAA-1098 / SB2B) protein is 7-cyano-7-deazaguanine synthase.